A 787-amino-acid polypeptide reads, in one-letter code: Vacuolar protein sorting-associated protein 35A (787 aa).

M1 is subject to N-acetylmethionine.

Belongs to the VPS35 family. Component of the retromer complex which consists of VPS29 (MAG1), VPS26 (VPS26A or VPS26B), VPS35 (VPS35A or VPS35B or VPS35C), VPS5/17 (SNX1 or SNX2A or SNX2B). Component of a retromer subcomplex consisting of VPS29 (MAG1), VPS26 (VPS26A or VPS26B), VPS35 (VPS35A or VPS35B or VPS35C). Interacts with RABG3F.

It is found in the cytoplasm. It localises to the endosome membrane. The protein localises to the prevacuolar compartment membrane. Its subcellular location is the golgi apparatus. The protein resides in the trans-Golgi network membrane. Plays a role in vesicular protein sorting. Component of the membrane-associated retromer complex which is essential in endosome-to-Golgi retrograde transport. Also involved in the efficient sorting of seed storage proteins. Binds alone to endosomal membranes and is required for recruitment of VPS26 and VPS29 to membrane. The VPS29-VPS26-VPS35 subcomplex may be involved in recycling of specific cargos from endosome to the plasma membrane. In Arabidopsis thaliana (Mouse-ear cress), this protein is Vacuolar protein sorting-associated protein 35A (VPS35A).